We begin with the raw amino-acid sequence, 224 residues long: Probable proteasome subunit beta type-4 (224 aa).

Belongs to the peptidase T1B family. In terms of assembly, the 26S proteasome consists of a 20S proteasome core and two 19S regulatory subunits. The 20S proteasome core is composed of 28 subunits that are arranged in four stacked rings, resulting in a barrel-shaped structure. The two end rings are each formed by seven alpha subunits, and the two central rings are each formed by seven beta subunits. The catalytic chamber with the active sites is on the inside of the barrel.

It is found in the cytoplasm. The protein resides in the nucleus. Its function is as follows. Non-catalytic component of the proteasome, a multicatalytic proteinase complex which is characterized by its ability to cleave peptides with Arg, Phe, Tyr, Leu, and Glu adjacent to the leaving group at neutral or slightly basic pH. The proteasome has an ATP-dependent proteolytic activity. The protein is Probable proteasome subunit beta type-4 (CPR1) of Cryptococcus neoformans var. neoformans serotype D (strain B-3501A) (Filobasidiella neoformans).